The following is a 381-amino-acid chain: Anhydro-N-acetylmuramic acid kinase (381 aa).

Gly22–Asp29 contacts ATP.

Belongs to the anhydro-N-acetylmuramic acid kinase family.

It carries out the reaction 1,6-anhydro-N-acetyl-beta-muramate + ATP + H2O = N-acetyl-D-muramate 6-phosphate + ADP + H(+). It functions in the pathway amino-sugar metabolism; 1,6-anhydro-N-acetylmuramate degradation. The protein operates within cell wall biogenesis; peptidoglycan recycling. Catalyzes the specific phosphorylation of 1,6-anhydro-N-acetylmuramic acid (anhMurNAc) with the simultaneous cleavage of the 1,6-anhydro ring, generating MurNAc-6-P. Is required for the utilization of anhMurNAc either imported from the medium or derived from its own cell wall murein, and thus plays a role in cell wall recycling. The protein is Anhydro-N-acetylmuramic acid kinase of Xylella fastidiosa (strain Temecula1 / ATCC 700964).